The sequence spans 952 residues: Eukaryotic initiation factor 4F subunit p150 (952 aa).

3 disordered regions span residues 1–77 (MTDE…NYNG), 115–389 (GSAP…DAGT), and 481–575 (VIPP…LVPS). Residues 7–16 (HPTQSASKQE) show a composition bias toward polar residues. The span at 29-46 (ESQQQRGYTNYNNGSNYT) shows a compositional bias: low complexity. Residues 47–56 (QKKPYNSNRP) show a composition bias toward polar residues. The span at 65–74 (GPNRYNNRGN) shows a compositional bias: low complexity. A compositionally biased stretch (basic and acidic residues) spans 140 to 151 (SGEHLDLKEQHK). The segment covering 154 to 166 (LQSQERSTVSPQP) has biased composition (polar residues). Ser163 carries the phosphoserine modification. A compositionally biased stretch (low complexity) spans 175-191 (DSTSTSTPTPTPSTNDS). Position 181 is a phosphothreonine (Thr181). The interaction with PAB1 stretch occupies residues 188-299 (TNDSKASSEE…KEESTPKVLT (112 aa)). Ser195 is modified (phosphoserine). Residues 218–228 (AALEKKRKEQL) show a composition bias toward basic and acidic residues. Residues 229–244 (EGSSGNNNIPMKTTPE) are compositionally biased toward polar residues. 3 stretches are compositionally biased toward basic and acidic residues: residues 246–276 (VEEK…KQET), 283–294 (QGEKGQIKEEST), and 309–333 (QQKE…ETKS). Residues 355 to 368 (TEQSNIDESATTPA) are compositionally biased toward polar residues. Ser503 is subject to Phosphoserine. Composition is skewed to basic and acidic residues over residues 504 to 521 (RGHD…DRAN) and 532 to 569 (RMND…KEEV). One can recognise an MIF4G domain in the interval 607–850 (ERKMKSLLNK…IDIKELRHDK (244 aa)). Residues 870–952 (EEERQRQLKN…ALMGESDDEE (83 aa)) are disordered. Positions 879–894 (NNSRSNSRRTNNSSNR) are enriched in low complexity. Ser883 is modified (phosphoserine). A Phosphothreonine modification is found at Thr888. Phosphoserine is present on residues Ser892, Ser896, Ser908, and Ser948. Polar residues predominate over residues 908–922 (SFITTRTYSQRNSQR).

This sequence belongs to the eukaryotic initiation factor 4G family. Component of the eIF4F complex, which composition varies with external and internal environmental conditions. It is composed of at least eIF4A (TIF1/TIF2), eIF4E (TIF45) and eIF4G (TIF4631 or TIF4632). Interacts with PAT1 in a RNA-dependent manner.

The protein resides in the cytoplasm. The protein localises to the P-body. It is found in the stress granule. In terms of biological role, component of the eIF4F complex, which interacts with the mRNA cap structure and serves as an initial point of assembly for the translation apparatus. Stimulates translation by interaction with polyadenylate-binding protein PAB1, bringing the 5'- and 3'-ends of the mRNA in proximity. The formation of this circular mRNP structure appears to be critical for the synergistic effects of the cap and the poly(A) tail in facilitating translation initiation, recycling of ribosomes, and mRNA stability. TIF4631 is probably essential when TIF4632 is missing. This is Eukaryotic initiation factor 4F subunit p150 from Saccharomyces cerevisiae (strain ATCC 204508 / S288c) (Baker's yeast).